Consider the following 233-residue polypeptide: Protein AC81 (233 aa).

Helical transmembrane passes span 171-191 (SFQT…VEKF) and 194-214 (INLL…NYII).

The protein resides in the host nucleus. The protein localises to the host membrane. Its subcellular location is the virion. Functionally, plays an essential role in the assembly of nucleocapsids with envelopes. This chain is Protein AC81 (AC81), found in Autographa californica nuclear polyhedrosis virus (AcMNPV).